A 66-amino-acid chain; its full sequence is Alpha-like toxin BmK-M7 (66 aa).

An LCN-type CS-alpha/beta domain is found at arginine 2 to histidine 64. 4 cysteine pairs are disulfide-bonded: cysteine 12-cysteine 63, cysteine 16-cysteine 36, cysteine 22-cysteine 46, and cysteine 26-cysteine 48.

Belongs to the long (4 C-C) scorpion toxin superfamily. Sodium channel inhibitor family. Alpha subfamily. In terms of tissue distribution, expressed by the venom gland.

The protein localises to the secreted. Its function is as follows. Alpha toxins bind voltage-independently at site-3 of sodium channels (Nav) and inhibit the inactivation of the activated channels, thereby blocking neuronal transmission. This toxin is active on both mammals and insects. It can be considered as a cardiotoxin, as it can bind to human cardiac sodium channel and modify its normal properties. This chain is Alpha-like toxin BmK-M7, found in Olivierus martensii (Manchurian scorpion).